The sequence spans 414 residues: Isocitrate dehydrogenase [NADP] cytoplasmic (414 aa).

Position 2 is an N-acetylserine (Ser-2). Phosphotyrosine is present on Tyr-42. 75 to 77 is an NADP(+) binding site; that stretch reads TIT. Thr-77 provides a ligand contact to substrate. Lys-81 carries the N6-acetyllysine modification. NADP(+) is bound at residue Arg-82. Substrate-binding positions include 94 to 100 and Arg-109; that span reads SPNGTIR. Lys-126 carries the N6-succinyllysine modification. Arg-132 and Lys-212 together coordinate substrate. Lys-224, Lys-233, and Lys-243 each carry N6-acetyllysine. Residue Asp-252 participates in Mn(2+) binding. Position 260 (Lys-260) interacts with NADP(+). The Mn(2+) site is built by Asp-275 and Asp-279. 310–315 contacts NADP(+); the sequence is GTVTRH. The residue at position 321 (Lys-321) is an N6-acetyllysine. Asn-328 is an NADP(+) binding site. Ser-389 bears the Phosphoserine mark. Residue Lys-400 is modified to N6-succinyllysine.

It belongs to the isocitrate and isopropylmalate dehydrogenases family. In terms of assembly, homodimer. The cofactor is Mg(2+). Mn(2+) serves as cofactor. Acetylation at Lys-374 dramatically reduces catalytic activity.

It localises to the cytoplasm. The protein resides in the cytosol. It catalyses the reaction D-threo-isocitrate + NADP(+) = 2-oxoglutarate + CO2 + NADPH. Catalyzes the NADP(+)-dependent oxidative decarboxylation of isocitrate (D-threo-isocitrate) to 2-ketoglutarate (2-oxoglutarate), which is required by other enzymes such as the phytanoyl-CoA dioxygenase. Plays a critical role in the generation of NADPH, an important cofactor in many biosynthesis pathways. May act as a corneal epithelial crystallin and may be involved in maintaining corneal epithelial transparency. This chain is Isocitrate dehydrogenase [NADP] cytoplasmic (IDH1), found in Pongo abelii (Sumatran orangutan).